Reading from the N-terminus, the 399-residue chain is Adenylate cyclase (399 aa).

Positions 1–10 (MTVGDTTSGS) are enriched in polar residues. The disordered stretch occupies residues 1 to 35 (MTVGDTTSGSGEEPAADSSVHATPHHEVDHTVEPT). Positions 24 to 33 (PHHEVDHTVE) are enriched in basic and acidic residues. Residues 198–307 (RVRFADLVGF…TTVNLASRLT (110 aa)) form the Guanylate cyclase domain. The Mg(2+) site is built by aspartate 203 and aspartate 247.

It belongs to the adenylyl cyclase class-3 family. Requires Mg(2+) as cofactor.

The enzyme catalyses ATP = 3',5'-cyclic AMP + diphosphate. The protein is Adenylate cyclase (cya) of Streptomyces griseus.